We begin with the raw amino-acid sequence, 154 residues long: Small ribosomal subunit protein bS16 (154 aa).

The tract at residues 82-154 (VQERAARSNP…EAAAEESTEA (73 aa)) is disordered. The segment covering 92 to 109 (KKAEPGEKAKERAEERAA) has biased composition (basic and acidic residues). A compositionally biased stretch (low complexity) spans 110-129 (KLAAAEEAANAPAEEPAAEP). Residues 142 to 154 (PAEEAAAEESTEA) are compositionally biased toward acidic residues.

This sequence belongs to the bacterial ribosomal protein bS16 family.

This chain is Small ribosomal subunit protein bS16, found in Rhizorhabdus wittichii (strain DSM 6014 / CCUG 31198 / JCM 15750 / NBRC 105917 / EY 4224 / RW1) (Sphingomonas wittichii).